We begin with the raw amino-acid sequence, 416 residues long: Multifunctional CCA protein (416 aa).

The ATP site is built by Gly8 and Arg11. The CTP site is built by Gly8 and Arg11. Mg(2+) contacts are provided by Asp21 and Asp23. The ATP site is built by Arg91, Arg137, and Arg140. Residues Arg91, Arg137, and Arg140 each coordinate CTP. An HD domain is found at 228–329 (TGVHTLMVLA…VKIFDKADFW (102 aa)).

The protein belongs to the tRNA nucleotidyltransferase/poly(A) polymerase family. Bacterial CCA-adding enzyme type 1 subfamily. Monomer. Can also form homodimers and oligomers. Requires Mg(2+) as cofactor. It depends on Ni(2+) as a cofactor.

The enzyme catalyses a tRNA precursor + 2 CTP + ATP = a tRNA with a 3' CCA end + 3 diphosphate. It carries out the reaction a tRNA with a 3' CCA end + 2 CTP + ATP = a tRNA with a 3' CCACCA end + 3 diphosphate. Catalyzes the addition and repair of the essential 3'-terminal CCA sequence in tRNAs without using a nucleic acid template. Adds these three nucleotides in the order of C, C, and A to the tRNA nucleotide-73, using CTP and ATP as substrates and producing inorganic pyrophosphate. tRNA 3'-terminal CCA addition is required both for tRNA processing and repair. Also involved in tRNA surveillance by mediating tandem CCA addition to generate a CCACCA at the 3' terminus of unstable tRNAs. While stable tRNAs receive only 3'-terminal CCA, unstable tRNAs are marked with CCACCA and rapidly degraded. In Shewanella baltica (strain OS185), this protein is Multifunctional CCA protein.